The primary structure comprises 385 residues: Chaperone protein DnaJ (385 aa).

A J domain is found at 5–70 (DYYEVLGVSK…DKKAAYDRFG (66 aa)). A CR-type zinc finger spans residues 143–221 (GLSKQITVPS…CGGAGRQEKD (79 aa)). Residues C156, C159, C173, C176, C195, C198, C209, and C212 each coordinate Zn(2+). CXXCXGXG motif repeat units follow at residues 156 to 163 (CSSCDGTG), 173 to 180 (CPTCSGMG), 195 to 202 (CPTCNGMG), and 209 to 216 (CRTCGGAG). The tract at residues 299–323 (GGRSRVRVPEGSQSGRQMRLRGKGM) is disordered.

The protein belongs to the DnaJ family. As to quaternary structure, homodimer. Requires Zn(2+) as cofactor.

It localises to the cytoplasm. In terms of biological role, participates actively in the response to hyperosmotic and heat shock by preventing the aggregation of stress-denatured proteins and by disaggregating proteins, also in an autonomous, DnaK-independent fashion. Unfolded proteins bind initially to DnaJ; upon interaction with the DnaJ-bound protein, DnaK hydrolyzes its bound ATP, resulting in the formation of a stable complex. GrpE releases ADP from DnaK; ATP binding to DnaK triggers the release of the substrate protein, thus completing the reaction cycle. Several rounds of ATP-dependent interactions between DnaJ, DnaK and GrpE are required for fully efficient folding. Also involved, together with DnaK and GrpE, in the DNA replication of plasmids through activation of initiation proteins. In Jannaschia sp. (strain CCS1), this protein is Chaperone protein DnaJ.